The primary structure comprises 149 residues: MKTNVIIDGDACPVVNSVIELTKGTGIFVTILRSFSHFSQQIQPEHVKIVYVDDGPDAVDYKIVELASNNDIVITQDYGLASLLIDKVHTVMHHKGNIYHSNNIQSLLNQRYLNAQIRRRGGRHKGPPPFTTEDRLKFEHAFRKIINQI.

The protein belongs to the UPF0178 family.

This chain is UPF0178 protein SERP0336, found in Staphylococcus epidermidis (strain ATCC 35984 / DSM 28319 / BCRC 17069 / CCUG 31568 / BM 3577 / RP62A).